The primary structure comprises 533 residues: Beta-glucosidase 10 (533 aa).

Residues 1-23 (MAVAGAMVMSGGVLLLLLAFTCA) form the signal peptide. Glutamine 53 contacts a beta-D-glucoside. Asparagine 122 carries N-linked (GlcNAc...) asparagine glycosylation. A beta-D-glucoside-binding positions include histidine 157 and 202–203 (NE). Glutamate 203 functions as the Proton donor in the catalytic mechanism. A disulfide bridge connects residues cysteine 222 and cysteine 230. An a beta-D-glucoside-binding site is contributed by tyrosine 369. Asparagine 384 is a glycosylation site (N-linked (GlcNAc...) asparagine). Glutamate 440 contributes to the a beta-D-glucoside binding site. The active-site Nucleophile is glutamate 440. Residue asparagine 448 is glycosylated (N-linked (GlcNAc...) asparagine). A beta-D-glucoside contacts are provided by residues tryptophan 489, 496 to 497 (EW), and phenylalanine 505.

It belongs to the glycosyl hydrolase 1 family.

It catalyses the reaction Hydrolysis of terminal, non-reducing beta-D-glucosyl residues with release of beta-D-glucose.. This Oryza sativa subsp. japonica (Rice) protein is Beta-glucosidase 10 (BGLU10).